A 213-amino-acid chain; its full sequence is Glutathione S-transferase DHAR1, mitochondrial (213 aa).

Positions 8 and 19 each coordinate glutathione. L-ascorbate-binding residues include lysine 8 and aspartate 19. A GST N-terminal domain is found at 10–83 (AVGAPDHLGD…DVIVGILEEK (74 aa)). The Nucleophile role is filled by cysteine 20. Cysteine 20 carries the S-glutathionyl cysteine modification. Positions 20–25 (CPFSQR) match the Glutathione-binding motif. Glutathione contacts are provided by lysine 47, valine 60, and serine 73. Positions 84–213 (YPDPPLKTPA…ISGWAPKVNP (130 aa)) constitute a GST C-terminal domain. Residues 133 to 137 (HLKSH) carry the Copper-binding motif. Glutathione-binding residues include histidine 160 and tryptophan 207. Lysine 210 serves as a coordination point for L-ascorbate.

This sequence belongs to the GST superfamily. DHAR family. In terms of assembly, monomer. Interacts with copper (Cu). In terms of processing, spontaneous S-glutathionylation in the presence of oxidized glutathione (GSSG). In terms of tissue distribution, expressed at least in roots and leaves.

The protein resides in the mitochondrion. It is found in the cytoplasm. Its subcellular location is the cytosol. The protein localises to the peroxisome. It localises to the membrane. It catalyses the reaction RX + glutathione = an S-substituted glutathione + a halide anion + H(+). It carries out the reaction L-dehydroascorbate + 2 glutathione = glutathione disulfide + L-ascorbate. In terms of biological role, displays a dual function. As a soluble protein, exhibits glutathione-dependent thiol transferase and dehydroascorbate (DHA) reductase activities. Key component of the ascorbate recycling system. Involved in the redox homeostasis, especially in scavenging of ROS under oxidative stresses, subsequently to biotic or abiotic inducers. As a peripheral membrane protein, could also function as voltage-gated ion channel. The sequence is that of Glutathione S-transferase DHAR1, mitochondrial from Arabidopsis thaliana (Mouse-ear cress).